A 352-amino-acid polypeptide reads, in one-letter code: 4-hydroxy-3-methylbut-2-en-1-yl diphosphate synthase (flavodoxin) (352 aa).

[4Fe-4S] cluster is bound by residues C262, C265, C297, and E304.

The protein belongs to the IspG family. [4Fe-4S] cluster is required as a cofactor.

It catalyses the reaction (2E)-4-hydroxy-3-methylbut-2-enyl diphosphate + oxidized [flavodoxin] + H2O + 2 H(+) = 2-C-methyl-D-erythritol 2,4-cyclic diphosphate + reduced [flavodoxin]. It functions in the pathway isoprenoid biosynthesis; isopentenyl diphosphate biosynthesis via DXP pathway; isopentenyl diphosphate from 1-deoxy-D-xylulose 5-phosphate: step 5/6. In terms of biological role, converts 2C-methyl-D-erythritol 2,4-cyclodiphosphate (ME-2,4cPP) into 1-hydroxy-2-methyl-2-(E)-butenyl 4-diphosphate. This Campylobacter curvus (strain 525.92) protein is 4-hydroxy-3-methylbut-2-en-1-yl diphosphate synthase (flavodoxin).